We begin with the raw amino-acid sequence, 175 residues long: Large ribosomal subunit protein uL10 (175 aa).

The protein belongs to the universal ribosomal protein uL10 family. As to quaternary structure, part of the ribosomal stalk of the 50S ribosomal subunit. The N-terminus interacts with L11 and the large rRNA to form the base of the stalk. The C-terminus forms an elongated spine to which L12 dimers bind in a sequential fashion forming a multimeric L10(L12)X complex.

Its function is as follows. Forms part of the ribosomal stalk, playing a central role in the interaction of the ribosome with GTP-bound translation factors. The polypeptide is Large ribosomal subunit protein uL10 (Mycobacterium sp. (strain JLS)).